A 489-amino-acid polypeptide reads, in one-letter code: MTLRSIVIKSGGHRLDTSLIKKPAEINEYLASLKKETCDFATYVLCSICNSIIQKHQVQSKAKISCRKVLSCPDQSSAGGLGHKNWEPSGALILPSTKQMGAEGSPVKSRSLFCQTNHNHLVNMDPMVSNDNNQQREGEQVGAMVGDSSPEDSPSGKHWNVRKGSGLVDPQTSCIRQILLLQLELIEQQQKHLHNKNKEIEDLKAEKEMLMARIERMEHRLQMVKKDGVVSRPSQTTCHKEPEAETTTSDDVQHSGGRVQTPKQTQRGRGVKGSKGKFLLQDSPTGRSRRGQPRSPPTSQQESPALKEDMQCHSKEVPYLTTTEMYLSHWQTPPSPQRDPSTVHENTVEVPSWRESILEPLGQKEASDILECLDDSVFLKRHSKLELDEKRRKRWDIQRIREQRMFQRLQQRMNRRKVIQESEPELLSFHAEPEDVEYIMVTPFLPVVAFGSPLPNLKQQDFDLPWLDERSRCQPEVTKKRTPRRRCRK.

Disordered stretches follow at residues 126–164 (PMVSNDNNQQREGEQVGAMVGDSSPEDSPSGKHWNVRKG) and 224–311 (VKKD…EDMQ). A coiled-coil region spans residues 179–227 (LLLQLELIEQQQKHLHNKNKEIEDLKAEKEMLMARIERMEHRLQMVKKD). Residues 347–466 (TVEVPSWRES…LKQQDFDLPW (120 aa)) enclose the PEHE domain. Residues 371–389 (ECLDDSVFLKRHSKLELDE) form an interaction with KAT8 HAT domain region. The Bipartite nuclear localization signal signature appears at 380 to 394 (KRHSKLELDEKRRKR).

Belongs to the msl-1 family. Component of a multisubunit histone acetyltransferase complex (MSL). Interacts (via PEHE domain) with KAT8 (via HAT domain) and MSL3 (via MRG domain); both interactions are direct.

It is found in the nucleus. Its subcellular location is the nucleoplasm. The protein localises to the nucleus speckle. Its function is as follows. Component of histone acetyltransferase complex. Within MSL complex, promotes ubiquitination of histone H2B. The sequence is that of Male-specific lethal 1-like 1 (msl1l1) from Danio rerio (Zebrafish).